Reading from the N-terminus, the 309-residue chain is tRNA pseudouridine synthase B (309 aa).

Residue Asp-39 is the Nucleophile of the active site. The PUA domain occupies 229 to 306; it reads LPRVVVHQES…ERVLTLRKVF (78 aa).

It belongs to the pseudouridine synthase TruB family. Type 1 subfamily.

The catalysed reaction is uridine(55) in tRNA = pseudouridine(55) in tRNA. Its function is as follows. Responsible for synthesis of pseudouridine from uracil-55 in the psi GC loop of transfer RNAs. The sequence is that of tRNA pseudouridine synthase B from Thermotoga petrophila (strain ATCC BAA-488 / DSM 13995 / JCM 10881 / RKU-1).